Consider the following 807-residue polypeptide: Probable phosphoketolase (807 aa).

It belongs to the XFP family. The cofactor is thiamine diphosphate.

This is Probable phosphoketolase from Nitrosospira multiformis (strain ATCC 25196 / NCIMB 11849 / C 71).